Here is a 711-residue protein sequence, read N- to C-terminus: Ecdysone-inducible protein E75 (711 aa).

A DNA-binding region (nuclear receptor) is located at residues 44–120; the sequence is TVLCRVCGDK…VGMSRDAVRF (77 aa). 2 NR C4-type zinc fingers span residues 47–67 and 84–108; these read CRVC…CEGC and CTKN…LKKC. One can recognise an NR LBD domain in the interval 153–400; the sequence is DGPRLLARVV…QQMWVEDEGA (248 aa). 4 disordered regions span residues 405–432, 466–530, 559–602, and 680–711; these read SGAD…DCGT, LTVT…DMPV, AMRR…PIRA, and DAPQ…MLPA. Basic and acidic residues-rich tracts occupy residues 511-521 and 560-572; these read SLEEHSDDRRP and MRRD…EARP. The span at 574–590 shows a compositional bias: pro residues; the sequence is RPTPSPQPPHHPHPASP. Low complexity-rich tracts occupy residues 591-602 and 682-692; these read AHPAHSPRPIRA and PQPLNLSKKSP. The segment covering 693–711 has biased composition (pro residues); sequence SPSPPPPPPRSYMPPMLPA.

It belongs to the nuclear hormone receptor family. NR1 subfamily.

It localises to the nucleus. Its function is as follows. Orphan receptor possibly involved in the regulation of genes in the ecdysteroid cascade. The chain is Ecdysone-inducible protein E75 (E75) from Galleria mellonella (Greater wax moth).